Reading from the N-terminus, the 494-residue chain is 3-octaprenyl-4-hydroxybenzoate carboxy-lyase (494 aa).

Mn(2+) is bound at residue Asn-172. Residues 175–177, 189–191, and 194–195 each bind prenylated FMN; these read IYR, RWL, and RG. Glu-238 provides a ligand contact to Mn(2+). Asp-294 acts as the Proton donor in catalysis.

The protein belongs to the UbiD family. As to quaternary structure, homohexamer. Prenylated FMN serves as cofactor. It depends on Mn(2+) as a cofactor.

It is found in the cell membrane. It catalyses the reaction a 4-hydroxy-3-(all-trans-polyprenyl)benzoate + H(+) = a 2-(all-trans-polyprenyl)phenol + CO2. It participates in cofactor biosynthesis; ubiquinone biosynthesis. Catalyzes the decarboxylation of 3-octaprenyl-4-hydroxy benzoate to 2-octaprenylphenol, an intermediate step in ubiquinone biosynthesis. The protein is 3-octaprenyl-4-hydroxybenzoate carboxy-lyase of Albidiferax ferrireducens (strain ATCC BAA-621 / DSM 15236 / T118) (Rhodoferax ferrireducens).